The chain runs to 156 residues: Small ribosomal subunit protein uS7 (156 aa).

It belongs to the universal ribosomal protein uS7 family. Part of the 30S ribosomal subunit. Contacts proteins S9 and S11.

One of the primary rRNA binding proteins, it binds directly to 16S rRNA where it nucleates assembly of the head domain of the 30S subunit. Is located at the subunit interface close to the decoding center, probably blocks exit of the E-site tRNA. The protein is Small ribosomal subunit protein uS7 of Treponema denticola (strain ATCC 35405 / DSM 14222 / CIP 103919 / JCM 8153 / KCTC 15104).